A 201-amino-acid chain; its full sequence is Small ribosomal subunit protein uS4 (201 aa).

Residues serine 91–glutamate 151 form the S4 RNA-binding domain.

The protein belongs to the universal ribosomal protein uS4 family. In terms of assembly, part of the 30S ribosomal subunit. Contacts protein S5. The interaction surface between S4 and S5 is involved in control of translational fidelity.

One of the primary rRNA binding proteins, it binds directly to 16S rRNA where it nucleates assembly of the body of the 30S subunit. Functionally, with S5 and S12 plays an important role in translational accuracy. This is Small ribosomal subunit protein uS4 from Corynebacterium glutamicum (strain R).